Reading from the N-terminus, the 546-residue chain is Parathyroid hormone 2 receptor (546 aa).

The first 24 residues, 1 to 24 (MAWLETFTYICGWLILSSCLLVRA), serve as a signal peptide directing secretion. Topologically, residues 27–143 (DSDGTITIEE…GKQEFFESLY (117 aa)) are extracellular. N51, N106, N116, and N121 each carry an N-linked (GlcNAc...) asparagine glycan. The chain crosses the membrane as a helical span at residues 144–167 (ILYTVGYSISFGSLAVAILIIGYF). The Cytoplasmic portion of the chain corresponds to 168–174 (RRLHCTR). A helical transmembrane segment spans residues 175 to 194 (NYIHLHLFVSFMLRAMSIFV). At 195–235 (KDRVAQAHLGVEALQSLVMQGDLQNFIGGPSVDKSQYVGCK) the chain is on the extracellular side. The chain crosses the membrane as a helical span at residues 236–258 (IAVVMFIYFLATNYYWILVEGLY). Residues 259-273 (LHNLIFVSFFSDTKY) are Cytoplasmic-facing. The chain crosses the membrane as a helical span at residues 274–295 (LWGFISIGWGFPAVFVVAWAVA). The Extracellular segment spans residues 296–313 (RATLADTRCWELSAGDRW). Residues 314–334 (IYQAPILAAIGLNFILFLNTV) traverse the membrane as a helical segment. The Cytoplasmic portion of the chain corresponds to 335–361 (RVLATKIWETNAVGHDMRKQYRKLAKS). The helical transmembrane segment at 362 to 380 (TLVLVLVFGVHYIVFVCQP) threads the bilayer. Over 381–391 (HSFSGLWWEIR) the chain is Extracellular. A helical transmembrane segment spans residues 392–414 (MHCELFFNSFQGFFVSIVYCYCN). Over 415-546 (GEVQAEVKKM…EGCKGETHPI (132 aa)) the chain is Cytoplasmic. The segment at 497–546 (SEQDCQTHSPPEETKEGHRRQGDDSPVMESSRPVAFTLDTEGCKGETHPI) is disordered. Basic and acidic residues-rich tracts occupy residues 506 to 519 (PPEE…RQGD) and 537 to 546 (EGCKGETHPI).

This sequence belongs to the G-protein coupled receptor 2 family. In terms of assembly, binds to TIPF39/TIP39.

It localises to the cell membrane. Its function is as follows. This is a specific receptor for parathyroid hormone. The activity of this receptor is mediated by G proteins which activate adenylyl cyclase. PTH2R may be responsible for PTH effects in a number of physiological systems. It may play a significant role in pancreatic function. PTH2R presence in neurons indicates that it may function as a neurotransmitter receptor. This is Parathyroid hormone 2 receptor (Pth2r) from Mus musculus (Mouse).